The following is a 235-amino-acid chain: Small ribosomal subunit protein eS4 (235 aa).

In terms of domain architecture, S4 RNA-binding spans 38 to 101; sequence IPLLVLVRDF…EKSYRILFDE (64 aa).

Belongs to the eukaryotic ribosomal protein eS4 family.

This is Small ribosomal subunit protein eS4 (rps4e) from Archaeoglobus fulgidus (strain ATCC 49558 / DSM 4304 / JCM 9628 / NBRC 100126 / VC-16).